A 364-amino-acid chain; its full sequence is DNA replication and repair protein RecF (364 aa).

30–37 is a binding site for ATP; that stretch reads GANGSGKT.

Belongs to the RecF family.

Its subcellular location is the cytoplasm. The RecF protein is involved in DNA metabolism; it is required for DNA replication and normal SOS inducibility. RecF binds preferentially to single-stranded, linear DNA. It also seems to bind ATP. The chain is DNA replication and repair protein RecF from Sodalis glossinidius (strain morsitans).